A 910-amino-acid chain; its full sequence is DNA mismatch repair protein MutS (910 aa).

658–665 (GPNMGGKS) serves as a coordination point for ATP.

Belongs to the DNA mismatch repair MutS family.

This protein is involved in the repair of mismatches in DNA. It is possible that it carries out the mismatch recognition step. This protein has a weak ATPase activity. This chain is DNA mismatch repair protein MutS, found in Brucella anthropi (strain ATCC 49188 / DSM 6882 / CCUG 24695 / JCM 21032 / LMG 3331 / NBRC 15819 / NCTC 12168 / Alc 37) (Ochrobactrum anthropi).